Consider the following 559-residue polypeptide: Leucine-rich repeat protein soc-2 (559 aa).

Residues 1-17 show a composition bias toward basic and acidic residues; it reads METSKEFEFRPAKETSR. Residues 1–55 are disordered; it reads METSKEFEFRPAKETSRSKSPGGIVGRLSNFARNKARHSLSEKGSNSVGGSGGSG. LRR repeat units lie at residues 74-95, 97-118, 120-141, 143-164, 166-187, 189-210, 212-233, 235-257, 258-279, 281-302, 305-326, 329-350, 353-374, 376-397, 399-420, 422-443, 445-466, 468-489, 491-513, and 515-536; these read QDQR…IKEL, QLTE…IGQL, NLKK…LSSL, SLET…IYKI, SLET…IGNL, KLKM…IGKL, SLVV…IGEC, ALTQ…GKLT, NLVR…LESC, QLEE…LLTM, KIHT…GPQQ, PTVT…IFSK, RLTK…MGSW, SITE…IEKL, NLEI…IGNL, KLRE…IGFL, HLTK…IGNL, SLQD…IGHL, SLKS…LALC, and SLEI…ITAG.

This sequence belongs to the SHOC2 family. Interacts with let-60.

Acts as a Ras effector and participates in MAPK pathway activation. Probably acts as a scaffolding protein in a protein phosphatase complex that specifically dephosphorylates Raf kinase and stimulates Raf activity at specialized signaling complexes upon Ras activation. Required for vulval development. Involved in fluid homeostasis. Plays a role in nicotinic acetylcholine receptor (nAChR)-mediated sensitivity to nicotine. In Caenorhabditis briggsae, this protein is Leucine-rich repeat protein soc-2 (soc-2).